The sequence spans 155 residues: Small ribosomal subunit protein uS17 (155 aa).

Ala-2 bears the N-acetylalanine mark.

Belongs to the universal ribosomal protein uS17 family.

This Drosophila yakuba (Fruit fly) protein is Small ribosomal subunit protein uS17.